We begin with the raw amino-acid sequence, 345 residues long: UDP-3-O-acylglucosamine N-acyltransferase (345 aa).

Residue H239 is the Proton acceptor of the active site.

This sequence belongs to the transferase hexapeptide repeat family. LpxD subfamily. Homotrimer.

The enzyme catalyses a UDP-3-O-[(3R)-3-hydroxyacyl]-alpha-D-glucosamine + a (3R)-hydroxyacyl-[ACP] = a UDP-2-N,3-O-bis[(3R)-3-hydroxyacyl]-alpha-D-glucosamine + holo-[ACP] + H(+). It functions in the pathway bacterial outer membrane biogenesis; LPS lipid A biosynthesis. Its function is as follows. Catalyzes the N-acylation of UDP-3-O-acylglucosamine using 3-hydroxyacyl-ACP as the acyl donor. Is involved in the biosynthesis of lipid A, a phosphorylated glycolipid that anchors the lipopolysaccharide to the outer membrane of the cell. This chain is UDP-3-O-acylglucosamine N-acyltransferase, found in Geobacter metallireducens (strain ATCC 53774 / DSM 7210 / GS-15).